An 842-amino-acid chain; its full sequence is Circularly permutated Ras protein 1 (842 aa).

GTP-binding positions include 62-66 (DTAGQ), 121-124 (NKVD), and 181-188 (GGGGVGKS). A disordered region spans residues 253–274 (SGKDKQPSPQQAASPSTIDRTG). Positions 259–274 (PSPQQAASPSTIDRTG) are enriched in polar residues. In terms of domain architecture, VWFA spans 377 to 627 (IIIYCIDVSG…TQNPMIATDV (251 aa)).

The protein belongs to the small GTPase superfamily. CpRas family.

This is Circularly permutated Ras protein 1 (cpras1) from Dictyostelium discoideum (Social amoeba).